A 194-amino-acid chain; its full sequence is ATP-dependent Clp protease proteolytic subunit (194 aa).

Ser-98 functions as the Nucleophile in the catalytic mechanism. The active site involves His-123.

The protein belongs to the peptidase S14 family. In terms of assembly, fourteen ClpP subunits assemble into 2 heptameric rings which stack back to back to give a disk-like structure with a central cavity, resembling the structure of eukaryotic proteasomes.

It is found in the cytoplasm. The catalysed reaction is Hydrolysis of proteins to small peptides in the presence of ATP and magnesium. alpha-casein is the usual test substrate. In the absence of ATP, only oligopeptides shorter than five residues are hydrolyzed (such as succinyl-Leu-Tyr-|-NHMec, and Leu-Tyr-Leu-|-Tyr-Trp, in which cleavage of the -Tyr-|-Leu- and -Tyr-|-Trp bonds also occurs).. In terms of biological role, cleaves peptides in various proteins in a process that requires ATP hydrolysis. Has a chymotrypsin-like activity. Plays a major role in the degradation of misfolded proteins. This chain is ATP-dependent Clp protease proteolytic subunit, found in Staphylococcus carnosus (strain TM300).